Here is a 339-residue protein sequence, read N- to C-terminus: DNA-directed RNA polymerase subunit alpha (339 aa).

The segment at 1 to 233 (MVREEVAGST…DLFLPFLHAE (233 aa)) is alpha N-terminal domain (alpha-NTD). An alpha C-terminal domain (alpha-CTD) region spans residues 264–339 (KKGIPLNCIF…IDLLKNKLSF (76 aa)).

Belongs to the RNA polymerase alpha chain family. In plastids the minimal PEP RNA polymerase catalytic core is composed of four subunits: alpha, beta, beta', and beta''. When a (nuclear-encoded) sigma factor is associated with the core the holoenzyme is formed, which can initiate transcription.

Its subcellular location is the plastid. The protein localises to the chloroplast. It carries out the reaction RNA(n) + a ribonucleoside 5'-triphosphate = RNA(n+1) + diphosphate. Functionally, DNA-dependent RNA polymerase catalyzes the transcription of DNA into RNA using the four ribonucleoside triphosphates as substrates. The polypeptide is DNA-directed RNA polymerase subunit alpha (Festucopsis serpentini).